Consider the following 381-residue polypeptide: L-lactate dehydrogenase (381 aa).

An FMN hydroxy acid dehydrogenase domain is found at 1–380; the sequence is MIISASTDYR…TRDSLVRELG (380 aa). Substrate is bound at residue Y24. FMN contacts are provided by S106 and Q127. Y129 lines the substrate pocket. T155 provides a ligand contact to FMN. R164 contributes to the substrate binding site. K251 is a binding site for FMN. H275 acts as the Proton acceptor in catalysis. Residue R278 participates in substrate binding. 306–330 serves as a coordination point for FMN; sequence DSGIRSGLDVVRMIALGADTVLIGR.

It belongs to the FMN-dependent alpha-hydroxy acid dehydrogenase family. Homotetramer. FMN is required as a cofactor.

The protein localises to the cell inner membrane. The catalysed reaction is (S)-lactate + A = pyruvate + AH2. In terms of biological role, catalyzes the conversion of L-lactate to pyruvate. Is coupled to the respiratory chain. This chain is L-lactate dehydrogenase, found in Pseudomonas putida (strain ATCC 700007 / DSM 6899 / JCM 31910 / BCRC 17059 / LMG 24140 / F1).